Reading from the N-terminus, the 384-residue chain is Histone acetyltransferase type B subunit 2 (384 aa).

WD repeat units lie at residues 156–196 (GHSA…SSIS), 203–243 (RHET…CIHA), 247–287 (AHTS…QPLH), 291–331 (GHSK…AEVP), and 348–384 (GHTS…PQPE).

Belongs to the WD repeat RBAP46/RBAP48/MSI1 family. As to quaternary structure, component of the HAT-B complex.

Its subcellular location is the cytoplasm. It localises to the nucleus. In terms of biological role, regulatory subunit of the histone acetylase B (HAT-B) complex. The complex acetylates histone H4 which is required for telomeric silencing. This is Histone acetyltransferase type B subunit 2 (HAT2) from Encephalitozoon cuniculi (strain GB-M1) (Microsporidian parasite).